The primary structure comprises 365 residues: Chorismate synthase (365 aa).

R48 provides a ligand contact to NADP(+). Residues 130–132, 242–243, G290, 305–309, and R331 contribute to the FMN site; these read RSS, NA, and KPTSS.

Belongs to the chorismate synthase family. Homotetramer. FMNH2 serves as cofactor.

It carries out the reaction 5-O-(1-carboxyvinyl)-3-phosphoshikimate = chorismate + phosphate. It participates in metabolic intermediate biosynthesis; chorismate biosynthesis; chorismate from D-erythrose 4-phosphate and phosphoenolpyruvate: step 7/7. Its function is as follows. Catalyzes the anti-1,4-elimination of the C-3 phosphate and the C-6 proR hydrogen from 5-enolpyruvylshikimate-3-phosphate (EPSP) to yield chorismate, which is the branch point compound that serves as the starting substrate for the three terminal pathways of aromatic amino acid biosynthesis. This reaction introduces a second double bond into the aromatic ring system. This chain is Chorismate synthase, found in Erythrobacter litoralis (strain HTCC2594).